Here is a 182-residue protein sequence, read N- to C-terminus: pEARLI1-like lipid transfer protein 2 (182 aa).

An N-terminal signal peptide occupies residues 1 to 25 (MASKNSASLALFFALNILFFTLTAG). A compositionally biased stretch (pro residues) spans 33-92 (SPKPRPLPNPKVPSPKVPTPSVPSPYVPTPSVPSPSVPTPSVPSPSVPSPNPTPVIPPRT). Positions 33-94 (SPKPRPLPNP…TPVIPPRTPG (62 aa)) are disordered. 7 consecutive repeat copies span residues 42-46 (PKVPS), 47-51 (PKVPT), 52-56 (PSVPS), 62-66 (PSVPS), 67-71 (PSVPT), 72-76 (PSVPS), and 77-81 (PSVPS). The tract at residues 42 to 81 (PKVPSPKVPTPSVPSPYVPTPSVPSPSVPTPSVPSPSVPS) is 7 X 5 AA repeats of P-[KS]-V-P-[ST].

This sequence belongs to the plant LTP family. PEARLI1 subfamily.

The protein localises to the secreted. The protein resides in the cell wall. Its function is as follows. Probable lipid transfer protein (LTP). May improve freezing survival. Seems to control the flowering process and lignin synthesis. Confers resistance to Botrytis cinerea. This Arabidopsis thaliana (Mouse-ear cress) protein is pEARLI1-like lipid transfer protein 2.